A 320-amino-acid polypeptide reads, in one-letter code: Putative protein FRMPD2-like (320 aa).

PDZ domains lie at 1–46 (MTSI…ERRV) and 90–178 (EVKL…CRPP). The disordered stretch occupies residues 215-239 (DQEDSWRDSASPDAGEGLGLRPESS).

The chain is Putative protein FRMPD2-like from Homo sapiens (Human).